The sequence spans 624 residues: Forkhead box protein O1 (624 aa).

Disordered regions lie at residues 1 to 62 (MAEA…PSAS) and 94 to 128 (APLS…SRRN). Residue Thr-24 is modified to Phosphothreonine; by PKB/AKT1 or PKB/AKT2 and SGK1. 2 stretches are compositionally biased toward low complexity: residues 37–62 (SATS…PSAS) and 105–119 (AAAA…AGQP). The fork-head DNA-binding region spans 130–224 (WGNLSYADLI…KSGKSPRRRA (95 aa)). DNA-binding regions lie at residues 181-188 (NSIRHNLS) and 204-207 (SSWW). Ser-182 bears the Phosphoserine; by STK4/MST1 mark. Ser-188, Ser-204, and Ser-205 each carry phosphoserine. Residues 204–306 (SSWWMLNPEG…RLSPIMTEQD (103 aa)) are disordered. Residues Lys-215 and Lys-218 each carry the N6-acetyllysine modification. A Phosphoserine; by CDK1 modification is found at Ser-219. Omega-N-methylarginine; by PRMT1 is present on residues Arg-221 and Arg-223. The Nuclear localization signal motif lies at 221-223 (RRR). Ser-226 is subject to Phosphoserine; by PKB/AKT1 and SGK1. 3 positions are modified to N6-acetyllysine: Lys-232, Lys-235, and Lys-244. Residues 234–245 (AKSRGRAAKKKA) are compositionally biased toward basic residues. Residues 253-532 (GAGDSPGSQF…RLAPVKTALQ (280 aa)) form a sufficient for interaction with NLK region. Ser-257 and Ser-268 each carry phosphoserine. Residues 279 to 296 (NWSTFRPRTSSNASTISG) show a composition bias toward polar residues. Ser-289 carries the phosphoserine; by PKB/AKT1 modification. Ser-292 bears the Phosphoserine; by CK1 and SGK1 mark. Phosphoserine; by CK1 is present on Ser-295. Ser-299 is modified (phosphoserine; by DYRK1A). Phosphothreonine is present on Thr-303. The segment at 333–428 (SEISNPENME…YGGMSQYCAP (96 aa)) is required for interaction with RUNX2. N6-acetyllysine is present on Lys-393. A Required for interaction with SIRT1 motif is present at residues 431-435 (LKELL).

As to quaternary structure, interacts with LRPPRC. Interacts with RUNX2; the interaction inhibits RUNX2 transcriptional activity and mediates the IGF1/insulin-dependent BGLAP expression in osteoblasts Interacts with PPP2R1A; the interaction regulates the dephosphorylation of FOXO1 at Thr-24 and Ser-263 leading to its nuclear import. Interacts with NLK. Interacts with SIRT1; the interaction results in the deacetylation of FOXO1 leading to activation of FOXO1-mediated transcription of genes involved in DNA repair and stress resistance. Binds to CDK1. Interacts with the 14-3-3 proteins, YWHAG and YWHAZ; the interactions require insulin-stimulated phosphorylation on Thr-24, promote nuclear exit and loss of transcriptional activity. Interacts with SKP2; the interaction ubiquitinates FOXO1 leading to its proteasomal degradation. The interaction requires the presence of KRIT1. Interacts (via the C-terminal half) with ATF4 (via its DNA binding domain); the interaction occurs in osteoblasts, regulates glucose homeostasis via suppression of beta-cell proliferation and subsequent decrease in insulin production. Interacts with PRMT1; the interaction methylates FOXO1, prevents PKB/AKT1 phosphorylation and retains FOXO1 in the nucleus. Interacts with EP300 and CREBBP; the interactions acetylate FOXO1. Interacts with SIRT2; the interaction is disrupted in response to oxidative stress or serum deprivation, leading to increased level of acetylated FOXO1, which promotes stress-induced autophagy by stimulating E1-like activating enzyme ATG7. Interacts (acetylated form) with ATG7; the interaction is increased in response to oxidative stress or serum deprivation and promotes the autophagic process leading to cell death. Interacts (acetylated form) with PPARG. Interacts with XBP1; this interaction is direct and leads to FOXO1 ubiquitination and degradation via the proteasome pathway. Interacts (via the Fork-head domain) with CEBPA; the interaction increases when FOXO1 is deacetylated. Interacts with WDFY2. Forms a complex with WDFY2 and AKT1. Interacts with CRY1. Interacts with PPIA/CYPA; the interaction promotes FOXO1 dephosphorylation, nuclear accumulation and transcriptional activity. Interacts with TOX4; FOXO1 is required for full induction of TOX4-dependent activity and the interaction is inhibited by insulin. Interacts (when phosphorylated on Ser-226) with STUB1/CHIP. In terms of processing, phosphorylation by NLK promotes nuclear export and inhibits the transcriptional activity. In response to growth factors, phosphorylation on Thr-24, Ser-226 and Ser-292 by PKB/AKT1 promotes nuclear export and inactivation of transactivational activity. Phosphorylation on Thr-24 is required for binding 14-3-3 proteins. Phosphorylation of Ser-226 decreases DNA-binding activity and promotes the phosphorylation of Thr-24 and Ser-289, permitting phosphorylation of Ser-292 and Ser-295, probably by CDK1, leading to nuclear exclusion and loss of function. Stress signals, such as response to oxygen or nitric oxide, attenuate the PKB/AKT1-mediated phosphorylation leading to nuclear retention. Phosphorylation of Ser-299 is independent of IGF1 and leads to reduced function. Dephosphorylated on Thr-24 and Ser-226 by PP2A in beta-cells under oxidative stress leading to nuclear retention. Phosphorylation of Ser-219 by CDK1 disrupts binding of 14-3-3 proteins leading to nuclear accumulation and has no effect on DNA binding nor transcriptional activity. Phosphorylation by STK4/MST1 on Ser-182, upon oxidative stress, inhibits binding to 14-3-3 proteins and nuclear export. PPIA/CYPA promotes its dephosphorylation on Ser-226. Post-translationally, ubiquitinated by SKP2. Ubiquitination leads to proteasomal degradation. Ubiquitinated by STUB1/CHIP; when Ser-226 is phosphorylated. Methylation inhibits AKT1-mediated phosphorylation at Ser-226 and is increased by oxidative stress. In terms of processing, acetylated. Acetylation at Lys-232 and Lys-244 are necessary for autophagic cell death induction. Deacetylated by SIRT2 in response to oxidative stress or serum deprivation, thereby negatively regulating FOXO1-mediated autophagic cell death. Once in the nucleus, acetylated by CREBBP/EP300. Acetylation diminishes the interaction with target DNA and attenuates the transcriptional activity. It increases the phosphorylation at Ser-226. Deacetylation by SIRT1 results in reactivation of the transcriptional activity. Oxidative stress by hydrogen peroxide treatment appears to promote deacetylation and uncoupling of insulin-induced phosphorylation. By contrast, resveratrol acts independently of acetylation. Acetylated at Lys-393, promoting its localization to the nucleus and transcription factor activity. Deacetylation at Lys-393 by SIRT6, promotes its translocation into the cytoplasm, preventing its transcription factor activity. Deacetylation and subsequent inhibition by SIRT6 has different effects depending on cell types: it inhibits gluconeogenesis in hepatocytes, promotes glucose sensing in pancreatic beta-cells and regulates lipid catabolism in brown adipocytes.

The protein localises to the cytoplasm. It is found in the nucleus. Functionally, transcription factor that is the main target of insulin signaling and regulates metabolic homeostasis in response to oxidative stress. Binds to the insulin response element (IRE) with consensus sequence 5'-TT[G/A]TTTTG-3' and the related Daf-16 family binding element (DBE) with consensus sequence 5'-TT[G/A]TTTAC-3'. Activity suppressed by insulin. Main regulator of redox balance and osteoblast numbers and controls bone mass. Orchestrates the endocrine function of the skeleton in regulating glucose metabolism. Also acts as a key regulator of chondrogenic commitment of skeletal progenitor cells in response to lipid availability: when lipids levels are low, translocates to the nucleus and promotes expression of SOX9, which induces chondrogenic commitment and suppresses fatty acid oxidation. Acts synergistically with ATF4 to suppress osteocalcin/BGLAP activity, increasing glucose levels and triggering glucose intolerance and insulin insensitivity. Also suppresses the transcriptional activity of RUNX2, an upstream activator of osteocalcin/BGLAP. Acts as an inhibitor of glucose sensing in pancreatic beta cells by acting as a transcription repressor and suppressing expression of PDX1. In hepatocytes, promotes gluconeogenesis by acting together with PPARGC1A and CEBPA to activate the expression of genes such as IGFBP1, G6PC1 and PCK1. Also promotes gluconeogenesis by directly promoting expression of PPARGC1A and G6PC1. Important regulator of cell death acting downstream of CDK1, PKB/AKT1 and STK4/MST1. Promotes neural cell death. Mediates insulin action on adipose tissue. Regulates the expression of adipogenic genes such as PPARG during preadipocyte differentiation and, adipocyte size and adipose tissue-specific gene expression in response to excessive calorie intake. Regulates the transcriptional activity of GADD45A and repair of nitric oxide-damaged DNA in beta-cells. Required for the autophagic cell death induction in response to starvation or oxidative stress in a transcription-independent manner. Mediates the function of MLIP in cardiomyocytes hypertrophy and cardiac remodeling. Positive regulator of apoptosis in cardiac smooth muscle cells as a result of its transcriptional activation of pro-apoptotic genes. Regulates endothelial cell (EC) viability and apoptosis in a PPIA/CYPA-dependent manner via transcription of CCL2 and BCL2L11 which are involved in EC chemotaxis and apoptosis. The chain is Forkhead box protein O1 (FOXO1) from Bos taurus (Bovine).